The chain runs to 266 residues: Undecaprenyl-diphosphatase (266 aa).

A run of 8 helical transmembrane segments spans residues 1 to 21 (MDTFQVIILALIQGLTEFLPI), 39 to 59 (QGLSFDVAVNTGSLFAVVIYF), 87 to 107 (WWIILATLPAVFFGFIAKDFI), 111 to 131 (LRSAGVIAVTTIVFGLLLWWA), 149 to 169 (ALLIGFAQALALIPGTSRSGA), 183 to 203 (AAARFSFLMSVPVSLGAAILV), 218 to 238 (ALTLGTVISFVAAYLCIHYFL), and 246 to 266 (MTPFVIYRLILGAVLCGFIFL).

This sequence belongs to the UppP family.

It is found in the cell inner membrane. The enzyme catalyses di-trans,octa-cis-undecaprenyl diphosphate + H2O = di-trans,octa-cis-undecaprenyl phosphate + phosphate + H(+). Catalyzes the dephosphorylation of undecaprenyl diphosphate (UPP). Confers resistance to bacitracin. This chain is Undecaprenyl-diphosphatase, found in Shewanella sp. (strain MR-7).